The sequence spans 505 residues: Oxidative stress-induced growth inhibitor 2 (505 aa).

This sequence belongs to the OKL38 family. The cofactor is NADPH. As to expression, ubiquitous. Expressed at higher levels in testis and ovary.

The protein localises to the midbody. Its function is as follows. Monooxygenase catalytic activity. May be involved in meiosis or the maturation of germ cells. The chain is Oxidative stress-induced growth inhibitor 2 from Homo sapiens (Human).